The following is a 552-amino-acid chain: Hydroxylamine reductase (552 aa).

The [2Fe-2S] cluster site is built by Cys-3, Cys-6, Cys-18, and Cys-25. 8 residues coordinate hybrid [4Fe-2O-2S] cluster: His-250, Glu-274, Cys-318, Cys-406, Cys-434, Cys-459, Glu-493, and Lys-495. A Cysteine persulfide modification is found at Cys-406.

This sequence belongs to the HCP family. The cofactor is [2Fe-2S] cluster. Requires hybrid [4Fe-2O-2S] cluster as cofactor.

It is found in the cytoplasm. The enzyme catalyses A + NH4(+) + H2O = hydroxylamine + AH2 + H(+). Its function is as follows. Catalyzes the reduction of hydroxylamine to form NH(3) and H(2)O. The sequence is that of Hydroxylamine reductase from Shewanella woodyi (strain ATCC 51908 / MS32).